The following is a 667-amino-acid chain: Threonine--tRNA ligase (667 aa).

Residues Met1–Arg64 enclose the TGS domain. The segment at Asp245–Pro553 is catalytic. Zn(2+) is bound by residues Cys347, His398, and His530.

The protein belongs to the class-II aminoacyl-tRNA synthetase family. In terms of assembly, homodimer. Requires Zn(2+) as cofactor.

It is found in the cytoplasm. It catalyses the reaction tRNA(Thr) + L-threonine + ATP = L-threonyl-tRNA(Thr) + AMP + diphosphate + H(+). Its function is as follows. Catalyzes the attachment of threonine to tRNA(Thr) in a two-step reaction: L-threonine is first activated by ATP to form Thr-AMP and then transferred to the acceptor end of tRNA(Thr). Also edits incorrectly charged L-seryl-tRNA(Thr). The sequence is that of Threonine--tRNA ligase from Agrobacterium fabrum (strain C58 / ATCC 33970) (Agrobacterium tumefaciens (strain C58)).